The primary structure comprises 367 residues: 3-dehydroquinate synthase (367 aa).

Residues Asp69 to Lys74, Gly103 to Asp107, Thr127 to Thr128, Lys140, and Lys149 each bind NAD(+). Zn(2+) is bound by residues Glu182, His245, and His262.

This sequence belongs to the sugar phosphate cyclases superfamily. Dehydroquinate synthase family. Requires Co(2+) as cofactor. Zn(2+) is required as a cofactor. It depends on NAD(+) as a cofactor.

The protein localises to the cytoplasm. The enzyme catalyses 7-phospho-2-dehydro-3-deoxy-D-arabino-heptonate = 3-dehydroquinate + phosphate. Its pathway is metabolic intermediate biosynthesis; chorismate biosynthesis; chorismate from D-erythrose 4-phosphate and phosphoenolpyruvate: step 2/7. Functionally, catalyzes the conversion of 3-deoxy-D-arabino-heptulosonate 7-phosphate (DAHP) to dehydroquinate (DHQ). The chain is 3-dehydroquinate synthase from Pseudomonas syringae pv. syringae (strain B728a).